The chain runs to 139 residues: Toxin FitB (139 aa).

Residues 2–123 (ILLDTNVISE…HSLTVATRDT (122 aa)) enclose the PINc domain. Residues D5 and D104 each contribute to the Mg(2+) site.

Belongs to the PINc/VapC protein family. As to quaternary structure, forms a heterodimer with FitA, 4 FitAB heterodimers form a complex that binds to promoter DNA. The complex is also seen in solution. This protein does not actually contact DNA. The cofactor is Mg(2+).

Functionally, toxic component of a type II toxin-antitoxin (TA) system. Plays a role in the speed with which bacteria traverse human epithelial cells; disruption of the locus increases the speed of trafficking about 2-4-fold. FitAB binds to its own promoter better than FitA alone. The expected nuclease activity was not observed for the FitAB complex, perhaps because FitA (the antitoxin) prevents metal binding and thus catalysis by FitB. The polypeptide is Toxin FitB (fitB) (Neisseria gonorrhoeae (strain ATCC 700825 / FA 1090)).